The sequence spans 263 residues: MSEHHFVFVHGAGHGGWCWYKLANSLRDNGHKATCIDLKGAGINPTDPNTVSSLDDYDEPLYAFLSQLPNDQKVILVSHSVGGGSMTAAMCLFPSKVSLAVYVAAAMVKPGTLIPERLKNVMKICSGLIEEETEKIWDFTFGNGPQNLPTSIMMKPEYVRDKFYNESPMEDYTLATTLLRPAPVMAFIGIMDIPGAPETDKIPRVYVKTGKDHLFEPVLQEVMLALWPPAHTFLLPDSDHSAFFSQPQELYQFLLQAASSLSP.

S80 (acyl-ester intermediate) is an active-site residue. Residues D212 and H240 each act as charge relay system in the active site.

It belongs to the AB hydrolase superfamily. Methylesterase family.

It catalyses the reaction methyl (indol-3-yl)acetate + H2O = (indol-3-yl)acetate + methanol + H(+). It participates in plant hormone biosynthesis. Methylesterase shown to have methyl indole-3-acetic acid (MeIAA) esterase activity in vitro. This chain is Methylesterase 18, found in Arabidopsis thaliana (Mouse-ear cress).